A 203-amino-acid chain; its full sequence is Small ribosomal subunit protein uS4c (203 aa).

Residues 91-159 (MRLDNIIFRL…ISKNIEFYQK (69 aa)) form the S4 RNA-binding domain.

This sequence belongs to the universal ribosomal protein uS4 family. Part of the 30S ribosomal subunit. Contacts protein S5. The interaction surface between S4 and S5 is involved in control of translational fidelity.

The protein resides in the plastid. It localises to the chloroplast. One of the primary rRNA binding proteins, it binds directly to 16S rRNA where it nucleates assembly of the body of the 30S subunit. Its function is as follows. With S5 and S12 plays an important role in translational accuracy. The polypeptide is Small ribosomal subunit protein uS4c (rps4) (Lopidium concinnum (Moss)).